Here is a 449-residue protein sequence, read N- to C-terminus: UDP-N-acetylmuramoylalanine--D-glutamate ligase (449 aa).

113-119 (GTNGKTT) lines the ATP pocket.

This sequence belongs to the MurCDEF family.

The protein localises to the cytoplasm. The catalysed reaction is UDP-N-acetyl-alpha-D-muramoyl-L-alanine + D-glutamate + ATP = UDP-N-acetyl-alpha-D-muramoyl-L-alanyl-D-glutamate + ADP + phosphate + H(+). It participates in cell wall biogenesis; peptidoglycan biosynthesis. Cell wall formation. Catalyzes the addition of glutamate to the nucleotide precursor UDP-N-acetylmuramoyl-L-alanine (UMA). The polypeptide is UDP-N-acetylmuramoylalanine--D-glutamate ligase (Gloeothece citriformis (strain PCC 7424) (Cyanothece sp. (strain PCC 7424))).